The primary structure comprises 496 residues: Putative (R)-citramalate synthase CimA (496 aa).

Positions 3-253 (VRVLDTTLRD…DTSINIEMLY (251 aa)) constitute a Pyruvate carboxyltransferase domain.

This sequence belongs to the alpha-IPM synthase/homocitrate synthase family. As to quaternary structure, homodimer.

The catalysed reaction is pyruvate + acetyl-CoA + H2O = (3R)-citramalate + CoA + H(+). The protein operates within amino-acid biosynthesis; L-isoleucine biosynthesis; 2-oxobutanoate from pyruvate: step 1/3. Its function is as follows. Catalyzes the condensation of pyruvate and acetyl-coenzyme A to form (R)-citramalate. This chain is Putative (R)-citramalate synthase CimA, found in Methanothermobacter thermautotrophicus (strain ATCC 29096 / DSM 1053 / JCM 10044 / NBRC 100330 / Delta H) (Methanobacterium thermoautotrophicum).